The primary structure comprises 100 residues: Small ribosomal subunit protein uS14 (100 aa).

The protein belongs to the universal ribosomal protein uS14 family. Part of the 30S ribosomal subunit. Contacts proteins S3 and S10.

In terms of biological role, binds 16S rRNA, required for the assembly of 30S particles and may also be responsible for determining the conformation of the 16S rRNA at the A site. This is Small ribosomal subunit protein uS14 from Microcystis aeruginosa (strain NIES-843 / IAM M-2473).